A 221-amino-acid polypeptide reads, in one-letter code: Ras-related protein RabS (221 aa).

16-23 (GDNQCGKS) is a GTP binding site. Residues 38 to 47 (GIQLWHGIEI) carry the Effector region motif. GTP-binding positions include 71 to 75 (DGNGG) and 137 to 140 (NKCD). Cysteine 218 is modified (cysteine methyl ester). Residue cysteine 218 is the site of S-geranylgeranyl cysteine attachment. The propeptide at 219-221 (IIN) is removed in mature form.

Belongs to the small GTPase superfamily. Rab family.

The protein resides in the cell membrane. This chain is Ras-related protein RabS (rabS), found in Dictyostelium discoideum (Social amoeba).